We begin with the raw amino-acid sequence, 559 residues long: MSATSVDPQRTKGQDNKVQNGSLHQKDAVHDNDFEPYLSGQSNPSNSYPSMSDPYLSSYYPPSIGFPYSLSEAPWSTAGDPPIPYLTTYGQLSNGDHHFMHDAVFGQPGGLGNNIYQHRFNFFPENPAFSAWGTSGSQGQQTQSSAYGSSYTYPPSSLGGTVVDGQTGFHSDSLNKAPGMNSLEQGMVGLKIGDVTTSAVKTVGSVVNSVALTGVLSGNGGTNVNMPVSKPTSWAAIASKPAKPQPKMKTKSGPIVGGALPPPPIKHNMDIGTWDNKGPAPKASAPQQTPSPQAAPQPQQVAQPLPVQPPPLVQPQYQSPQQPLQPRWVAPRNRNAAFGQSGGANSDSNSVGNAQPTSAPSVESHPVLEKLKAAHSYNPKEFDWNLKSGRVFIIKSYSEDDIHRSIKYSIWCSTEHGNKRLDGAFRSMSSKGPVYLLFSVNGSGHFCGVAEMKSPVDYGTSAGVWSQDKWKGKFDVKWIFVKDVPNNQLRHIRLENNDNKPVTNSRDTQEVPLEKAKQVLKIIASYKHTTSIFDDFSHYEKRQEEEEVVRKERQNRNKQ.

Residues 1–49 (MSATSVDPQRTKGQDNKVQNGSLHQKDAVHDNDFEPYLSGQSNPSNSYP) are disordered. N-acetylserine is present on S2. Residues 24–33 (HQKDAVHDND) show a composition bias toward basic and acidic residues. Position 182 is a phosphoserine (S182). Residues 239–365 (SKPAKPQPKM…PTSAPSVESH (127 aa)) are disordered. Composition is skewed to low complexity over residues 279-305 (PAPK…AQPL) and 314-326 (QPQY…PLQP). Polar residues predominate over residues 343–361 (GANSDSNSVGNAQPTSAPS). The 135-residue stretch at 389 to 523 (GRVFIIKSYS…EKAKQVLKII (135 aa)) folds into the YTH domain. Residues 395 to 397 (KSY), D401, 411 to 412 (WC), N441, W465, and W470 each bind RNA.

It belongs to the YTHDF family. YTHDF1 subfamily. Interacts with CNOT1; promoting recruitment of the CCR4-NOT complex. Interacts with ribosomes. Interacts with eIF3 (EIF3A or EIF3B). Interacts with YTHDF3. In terms of processing, ubiquitinated by the CUL7-FBXW8 E3 ligase complex leading to degradation. Deubiquitinated and stabilized by USP5 by removing 'Lys-11'-linked polyubiquitination. In brain, preferentially expressed in the hippocampus.

The protein localises to the cytoplasm. It localises to the P-body. It is found in the stress granule. In terms of biological role, specifically recognizes and binds N6-methyladenosine (m6A)-containing mRNAs, and regulates their stability. M6A is a modification present at internal sites of mRNAs and some non-coding RNAs and plays a role in mRNA stability and processing. Acts as a regulator of mRNA stability by promoting degradation of m6A-containing mRNAs via interaction with the CCR4-NOT complex. The YTHDF paralogs (YTHDF1, YTHDF2 and YTHDF3) share m6A-containing mRNAs targets and act redundantly to mediate mRNA degradation and cellular differentiation. Required to facilitate learning and memory formation in the hippocampus by binding to m6A-containing neuronal mRNAs. Acts as a regulator of axon guidance by binding to m6A-containing ROBO3 transcripts. Acts as a negative regulator of antigen cross-presentation in myeloid dendritic cells. In the context of tumorigenesis, negative regulation of antigen cross-presentation limits the anti-tumor response by reducing efficiency of tumor-antigen cross-presentation. Promotes formation of phase-separated membraneless compartments, such as P-bodies or stress granules, by undergoing liquid-liquid phase separation upon binding to mRNAs containing multiple m6A-modified residues: polymethylated mRNAs act as a multivalent scaffold for the binding of YTHDF proteins, juxtaposing their disordered regions and thereby leading to phase separation. The resulting mRNA-YTHDF complexes then partition into different endogenous phase-separated membraneless compartments, such as P-bodies, stress granules or neuronal RNA granules. The chain is YTH domain-containing family protein 1 from Mus musculus (Mouse).